A 130-amino-acid chain; its full sequence is Methylglyoxal synthase (130 aa).

The 130-residue stretch at 1 to 130 folds into the MGS-like domain; that stretch reads MSTPRIALIA…DLARRLPVKA (130 aa). Residues H11, K15, 37–40, and 57–58 each bind substrate; these read TGTT and SG. The active-site Proton donor/acceptor is D63. A substrate-binding site is contributed by H90.

Belongs to the methylglyoxal synthase family.

The enzyme catalyses dihydroxyacetone phosphate = methylglyoxal + phosphate. Catalyzes the formation of methylglyoxal from dihydroxyacetone phosphate. This Burkholderia thailandensis (strain ATCC 700388 / DSM 13276 / CCUG 48851 / CIP 106301 / E264) protein is Methylglyoxal synthase.